A 170-amino-acid polypeptide reads, in one-letter code: Acetyl-CoA decarbonylase/synthase complex subunit epsilon 2 (170 aa).

This sequence belongs to the CdhB family. In terms of assembly, heterotetramer of two alpha and two epsilon subunits. The ACDS complex is made up of alpha, epsilon, beta, gamma and delta subunits with a probable stoichiometry of (alpha(2)epsilon(2))(4)-beta(8)-(gamma(1)delta(1))(8).

It participates in one-carbon metabolism; methanogenesis from acetate. Part of a complex that catalyzes the reversible cleavage of acetyl-CoA, allowing growth on acetate as sole source of carbon and energy. The alpha-epsilon subcomponent functions as a carbon monoxide dehydrogenase. The precise role of the epsilon subunit is unclear; it may have a stabilizing role within the alpha(2)epsilon(2) component and/or be involved in electron transfer to FAD during a potential FAD-mediated CO oxidation. This chain is Acetyl-CoA decarbonylase/synthase complex subunit epsilon 2 (cdhB2), found in Methanosarcina mazei (strain ATCC BAA-159 / DSM 3647 / Goe1 / Go1 / JCM 11833 / OCM 88) (Methanosarcina frisia).